The sequence spans 154 residues: 6,7-dimethyl-8-ribityllumazine synthase (154 aa).

Residues phenylalanine 26, 60–62 (ALE), and 84–86 (CII) each bind 5-amino-6-(D-ribitylamino)uracil. Residue 89 to 90 (QT) participates in (2S)-2-hydroxy-3-oxobutyl phosphate binding. Histidine 92 (proton donor) is an active-site residue. Asparagine 117 serves as a coordination point for 5-amino-6-(D-ribitylamino)uracil. Arginine 131 contributes to the (2S)-2-hydroxy-3-oxobutyl phosphate binding site.

It belongs to the DMRL synthase family.

It carries out the reaction (2S)-2-hydroxy-3-oxobutyl phosphate + 5-amino-6-(D-ribitylamino)uracil = 6,7-dimethyl-8-(1-D-ribityl)lumazine + phosphate + 2 H2O + H(+). Its pathway is cofactor biosynthesis; riboflavin biosynthesis; riboflavin from 2-hydroxy-3-oxobutyl phosphate and 5-amino-6-(D-ribitylamino)uracil: step 1/2. Its function is as follows. Catalyzes the formation of 6,7-dimethyl-8-ribityllumazine by condensation of 5-amino-6-(D-ribitylamino)uracil with 3,4-dihydroxy-2-butanone 4-phosphate. This is the penultimate step in the biosynthesis of riboflavin. The polypeptide is 6,7-dimethyl-8-ribityllumazine synthase (Verminephrobacter eiseniae (strain EF01-2)).